A 121-amino-acid polypeptide reads, in one-letter code: Small ribosomal subunit protein uS13 (121 aa).

Residues 93–121 (RNLPVRGQRTRTNARTCKGPRKSMNKQFK) form a disordered region. The segment covering 110-121 (KGPRKSMNKQFK) has biased composition (basic residues).

The protein belongs to the universal ribosomal protein uS13 family. In terms of assembly, part of the 30S ribosomal subunit. Forms a loose heterodimer with protein S19. Forms two bridges to the 50S subunit in the 70S ribosome.

In terms of biological role, located at the top of the head of the 30S subunit, it contacts several helices of the 16S rRNA. In the 70S ribosome it contacts the 23S rRNA (bridge B1a) and protein L5 of the 50S subunit (bridge B1b), connecting the 2 subunits; these bridges are implicated in subunit movement. Contacts the tRNAs in the A and P-sites. The protein is Small ribosomal subunit protein uS13 of Blochmanniella pennsylvanica (strain BPEN).